The following is a 601-amino-acid chain: Urocanate hydratase (601 aa).

Residues 63–64 (GG) and Q141 each bind NAD(+). The insert stretch occupies residues 172 to 201 (SDRPSALLKQGLSPEGTAPGSGRSSAQVPG). The interval 179–200 (LKQGLSPEGTAPGSGRSSAQVP) is disordered. NAD(+) is bound by residues 216-218 (GMG), E236, 282-283 (NA), 307-311 (QTSAH), 317-318 (YL), and Y368. Residue C456 is part of the active site. NAD(+) is bound at residue G538.

This sequence belongs to the urocanase family. NAD(+) serves as cofactor.

It is found in the cytoplasm. It carries out the reaction 4-imidazolone-5-propanoate = trans-urocanate + H2O. Its pathway is amino-acid degradation; L-histidine degradation into L-glutamate; N-formimidoyl-L-glutamate from L-histidine: step 2/3. Functionally, catalyzes the conversion of urocanate to 4-imidazolone-5-propionate. The protein is Urocanate hydratase of Ralstonia nicotianae (strain ATCC BAA-1114 / GMI1000) (Ralstonia solanacearum).